The primary structure comprises 666 residues: Translation factor guf1, mitochondrial (666 aa).

The N-terminal 43 residues, 1–43, are a transit peptide targeting the mitochondrion; it reads MRGCLQLARWLRAAPKCPAASLLKPPSGLANPARFFTTSTACW. Residues 68–248 enclose the tr-type G domain; sequence DRYRNFCIVA…TVVEKIPAPV (181 aa). Residues 77 to 84, 141 to 145, and 195 to 198 contribute to the GTP site; these read AHVDHGKS, DTPGH, and NKVD.

It belongs to the TRAFAC class translation factor GTPase superfamily. Classic translation factor GTPase family. LepA subfamily.

The protein resides in the mitochondrion inner membrane. The catalysed reaction is GTP + H2O = GDP + phosphate + H(+). Functionally, promotes mitochondrial protein synthesis. May act as a fidelity factor of the translation reaction, by catalyzing a one-codon backward translocation of tRNAs on improperly translocated ribosomes. Binds to mitochondrial ribosomes in a GTP-dependent manner. In Aspergillus niger (strain ATCC MYA-4892 / CBS 513.88 / FGSC A1513), this protein is Translation factor guf1, mitochondrial (guf1).